The sequence spans 152 residues: Probable flagellum biosynthesis repressor protein FlbT (152 aa).

Belongs to the FlbT family.

In terms of biological role, has a post-transcriptional repressor function in flagellum biogenesis. Associates with the 5'-UTR of fljK mRNA and promotes its degradation. This is Probable flagellum biosynthesis repressor protein FlbT from Brucella abortus (strain S19).